Reading from the N-terminus, the 59-residue chain is Venom protein 27.7 (59 aa).

The N-terminal stretch at 1-29 (MTFITLTIGLSLRTIFLIFIFLPPPHLLA) is a signal peptide.

The protein belongs to the non-disulfide-bridged peptide (NDBP) superfamily. Expressed by the venom gland.

It is found in the secreted. This is Venom protein 27.7 from Lychas mucronatus (Chinese swimming scorpion).